The chain runs to 122 residues: Large ribosomal subunit protein uL14 (122 aa).

The protein belongs to the universal ribosomal protein uL14 family. In terms of assembly, part of the 50S ribosomal subunit. Forms a cluster with proteins L3 and L19. In the 70S ribosome, L14 and L19 interact and together make contacts with the 16S rRNA in bridges B5 and B8.

In terms of biological role, binds to 23S rRNA. Forms part of two intersubunit bridges in the 70S ribosome. This chain is Large ribosomal subunit protein uL14, found in Myxococcus xanthus (strain DK1622).